The following is a 150-amino-acid chain: Transthyretin (150 aa).

Positions 1–20 (MAFHSMLLVFLAGLVFLTEA) are cleaved as a signal peptide. Cys-33 carries the sulfocysteine modification. Positions 38, 77, and 140 each coordinate L-thyroxine.

This sequence belongs to the transthyretin family. In terms of assembly, homotetramer. Dimer of dimers. In the homotetramer, subunits assemble around a central channel that can accommodate two ligand molecules. Interacts with RBP4. Sulfonation of the reactive cysteine Cys-33 enhances the stability of the native conformation of TTR, avoiding misassembly of the protein leading to amyloid formation. Strongly expressed in the brain, and to a lesser extent in the eye.

Its subcellular location is the secreted. Its function is as follows. Thyroid hormone-binding protein, with a much higher binding affinity for triiodothyronine (T3) than for thyroxine (T4). Probably transports triiodothyronine from the bloodstream to the brain. The chain is Transthyretin (TTR) from Crocodylus porosus (Saltwater crocodile).